A 389-amino-acid polypeptide reads, in one-letter code: MWRVGHLLLLMSIVFRITEEKSLGDAGSLEDSMFIQEQKLVEDDDLNKVESFLGFMKEDFLRKLNLSGVPQEHRKVQPPQFMIELYNRYASDKNSIPRSDVIRSFVVQDVIYSIRQGNKTQHRLLFNVSIPNHEEITSVQLRLFTLWHRHKPACDDLFTSINVYDVEYEQNAKILHLLDGRDVRESINTWEAFDVTGAVRIWHESRRGAGEIQVEVQHSCDSFDISLSLEDNSSAVVIVFSDDLGNRKEESMRKVKEMLVREQQQVGNQAPVSNRHRRRKRKAKNNYCRRTSLKVNFKDIGWDKWIVAPPEYDAYECKGVCYFPLTDDVSPSRHAVIQTLVNLSNPKKANMACCVPTKLDPIAVMYQEKGVITVRHLYEEMKVAKCGCR.

A signal peptide spans 1–20 (MWRVGHLLLLMSIVFRITEE). Positions 21–280 (KSLGDAGSLE…PVSNRHRRRK (260 aa)) are excised as a propeptide. Asn65, Asn118, Asn127, and Asn232 each carry an N-linked (GlcNAc...) asparagine glycan. A compositionally biased stretch (polar residues) spans 263–272 (QQQVGNQAPV). The segment at 263 to 284 (QQQVGNQAPVSNRHRRRKRKAK) is disordered. The segment covering 274 to 284 (NRHRRRKRKAK) has biased composition (basic residues). 3 cysteine pairs are disulfide-bonded: Cys288–Cys354, Cys317–Cys386, and Cys321–Cys388. The N-linked (GlcNAc...) asparagine glycan is linked to Asn342.

The protein belongs to the TGF-beta family. Homodimer; disulfide-linked. Post-translationally, a reversible disulfide bond can be formed between the two subunits in the homodimer; this has no effect on gdf2 activity.

Its subcellular location is the secreted. In terms of biological role, potent circulating inhibitor of angiogenesis. Signals through the type I activin receptor ACVRL1 but not other Alks. Signaling through SMAD1 in endothelial cells requires TGF-beta coreceptor endoglin/eng. The protein is Growth/differentiation factor 2 (gdf2) of Danio rerio (Zebrafish).